Reading from the N-terminus, the 176-residue chain is RNA 2',3'-cyclic phosphodiesterase (176 aa).

The active-site Proton donor is the His-28. Short sequence motifs (HXTX) lie at residues 28–31 and 113–116; these read HITL and HVTL. Catalysis depends on His-113, which acts as the Proton acceptor.

The protein belongs to the 2H phosphoesterase superfamily. ThpR family.

It catalyses the reaction a 3'-end 2',3'-cyclophospho-ribonucleotide-RNA + H2O = a 3'-end 2'-phospho-ribonucleotide-RNA + H(+). Its function is as follows. Hydrolyzes RNA 2',3'-cyclic phosphodiester to an RNA 2'-phosphomonoester. The protein is RNA 2',3'-cyclic phosphodiesterase of Aeropyrum pernix (strain ATCC 700893 / DSM 11879 / JCM 9820 / NBRC 100138 / K1).